The primary structure comprises 202 residues: Matrix protein (202 aa).

The interval 13-32 is disordered; it reads DEEIPKPGTPSAPPDDDDLW. A PPXY motif motif is present at residues 35-38; it reads PPEY.

It belongs to the lyssavirus matrix protein family. Homomultimer. Interacts with nucleoprotein and with the cytoplasmic domain of glycoprotein.

Its subcellular location is the virion membrane. It is found in the host endomembrane system. In terms of biological role, plays a major role in assembly and budding of virion. Completely covers the ribonucleoprotein coil and keep it in condensed bullet-shaped form. Inhibits viral transcription and stimulates replication. Plays a major role in early induction of TRAIL-mediated apoptosis in infected neurons. This is Matrix protein (M) from Lagos bat virus (LBV).